A 200-amino-acid polypeptide reads, in one-letter code: Large ribosomal subunit protein uL4 (200 aa).

Positions 43–71 are disordered; sequence RAQKTRAEVSGSGKKPWRQKGTGRARSGD.

It belongs to the universal ribosomal protein uL4 family. In terms of assembly, part of the 50S ribosomal subunit.

One of the primary rRNA binding proteins, this protein initially binds near the 5'-end of the 23S rRNA. It is important during the early stages of 50S assembly. It makes multiple contacts with different domains of the 23S rRNA in the assembled 50S subunit and ribosome. Its function is as follows. Forms part of the polypeptide exit tunnel. The protein is Large ribosomal subunit protein uL4 of Actinobacillus pleuropneumoniae serotype 5b (strain L20).